Here is a 416-residue protein sequence, read N- to C-terminus: Pre-mRNA-splicing factor slu-7 (416 aa).

The disordered stretch occupies residues 1-34; sequence MPPPPPNRREQATAAPSSTDKSETGAGAARKEDN. The CCHC-type zinc-finger motif lies at 95 to 112; sequence GACENCGAMGHKKKDCLE. 2 stretches are compositionally biased toward basic and acidic residues: residues 168-179 and 188-213; these read RRALQGDQKTPD and DDKS…QSMR. A disordered region spans residues 168-213; it reads RRALQGDQKTPDGEGADGPEDDKSGFKYDEESDMGRDRATTKQSMR.

It belongs to the SLU7 family. In terms of assembly, associated with the spliceosome.

Its subcellular location is the nucleus. Its function is as follows. Involved in pre-mRNA splicing. This chain is Pre-mRNA-splicing factor slu-7 (slu-7), found in Neurospora crassa (strain ATCC 24698 / 74-OR23-1A / CBS 708.71 / DSM 1257 / FGSC 987).